We begin with the raw amino-acid sequence, 398 residues long: MGANTSSKAPVFDENEDVNFDHFEILRAIGKGSFGKVCIVRKNDTKKMYAMKYMNKQKCVERNEVRNVFKELQIMQGLEHPFLVNLWYSFQDEEDMFMVVDLLLGGDLRYHLQQNVHFQEDTVKLFICELAMALDYLQSQRIIHRDMKPDNILLDEHGHVHITDFNIAAMLPKETRITTVAGTKPYMAPEMFTSRKETGYSFAVDWWSLGVTAYELLRGRRPYHIRSSTSSKEIVNMFETAIVTYPSAWSQEMVSLLKKLLEPNPDQRFSHLTDIQNFPYMSDMNWDAVLQKRLIPGFIPTKGRLNCDPTFELEEMILESKPLHKKKKRLAKREKEMKKSDSSQTCLLQEHLDAVQKEFIIFNREKVKSDFNQRQANLALEQTKNNTEEEEDGQNNNL.

Gly-2 carries the N-myristoyl glycine lipid modification. The Protein kinase domain maps to 23-281 (FEILRAIGKG…LTDIQNFPYM (259 aa)). Residues 29-37 (IGKGSFGKV) and Lys-52 contribute to the ATP site. The active-site Proton acceptor is Asp-146. The tract at residues 379 to 398 (ALEQTKNNTEEEEDGQNNNL) is disordered. Residues 388 to 398 (EEEEDGQNNNL) show a composition bias toward acidic residues.

The protein belongs to the protein kinase superfamily. Ser/Thr protein kinase family. It depends on Mg(2+) as a cofactor.

It is found in the cell membrane. It catalyses the reaction L-seryl-[protein] + ATP = O-phospho-L-seryl-[protein] + ADP + H(+). It carries out the reaction L-threonyl-[protein] + ATP = O-phospho-L-threonyl-[protein] + ADP + H(+). This is Serine/threonine-protein kinase 32A from Mus musculus (Mouse).